Reading from the N-terminus, the 292-residue chain is Phosphatidylglycerol--prolipoprotein diacylglyceryl transferase (292 aa).

A run of 3 helical transmembrane segments spans residues 18–38, 67–87, and 105–125; these read LFGV…GLLI, LLTW…VLFY, and GGMS…AFCL. R150 provides a ligand contact to a 1,2-diacyl-sn-glycero-3-phospho-(1'-sn-glycerol). A run of 3 helical transmembrane segments spans residues 193–213, 222–242, and 266–286; these read QIYE…LLVW, GSVS…VEFV, and GLTM…YLIL.

It belongs to the Lgt family.

Its subcellular location is the cell inner membrane. The enzyme catalyses L-cysteinyl-[prolipoprotein] + a 1,2-diacyl-sn-glycero-3-phospho-(1'-sn-glycerol) = an S-1,2-diacyl-sn-glyceryl-L-cysteinyl-[prolipoprotein] + sn-glycerol 1-phosphate + H(+). It functions in the pathway protein modification; lipoprotein biosynthesis (diacylglyceryl transfer). Functionally, catalyzes the transfer of the diacylglyceryl group from phosphatidylglycerol to the sulfhydryl group of the N-terminal cysteine of a prolipoprotein, the first step in the formation of mature lipoproteins. In Cereibacter sphaeroides (strain ATCC 17023 / DSM 158 / JCM 6121 / CCUG 31486 / LMG 2827 / NBRC 12203 / NCIMB 8253 / ATH 2.4.1.) (Rhodobacter sphaeroides), this protein is Phosphatidylglycerol--prolipoprotein diacylglyceryl transferase.